The chain runs to 274 residues: MAVIKCKPTSPGRRHVVKVVNSDLHKGKPFAGLLAKKSKSGGRNNTGRITVRHVGGGHKQHYRLIDFKRDKDGIPAKIERLEYDPNRTAHIALVLYADGERRYILAAKGMQAGDKIQSGVEAEIKTGNAMPLRNIPVGSVVHAVEMKPGKGAQIARSAGAYVQVVARDGAYATLRLRSGEMRKVPVDCRATFGEVGNAEHMLRQLGKAGAKRWRGVRPTVRGVAMNPVDHPHGGGEGRTSGGRHPVTPWGVPTKGYKTRSNKRTDKYIVRRRNK.

The interval 223–274 (VAMNPVDHPHGGGEGRTSGGRHPVTPWGVPTKGYKTRSNKRTDKYIVRRRNK) is disordered.

This sequence belongs to the universal ribosomal protein uL2 family. Part of the 50S ribosomal subunit. Forms a bridge to the 30S subunit in the 70S ribosome.

Its function is as follows. One of the primary rRNA binding proteins. Required for association of the 30S and 50S subunits to form the 70S ribosome, for tRNA binding and peptide bond formation. It has been suggested to have peptidyltransferase activity; this is somewhat controversial. Makes several contacts with the 16S rRNA in the 70S ribosome. The sequence is that of Large ribosomal subunit protein uL2 from Shewanella sp. (strain ANA-3).